Consider the following 683-residue polypeptide: Methionine--tRNA ligase (683 aa).

A 'HIGH' region motif is present at residues 23–33 (PYANGSAHIGH). Cys154, Cys157, Cys166, and Cys170 together coordinate Zn(2+). Positions 335 to 339 (KFSKS) match the 'KMSKS' region motif. Lys338 is a binding site for ATP. A tRNA-binding domain is found at 583–683 (DFAKMELRVG…KPSEPGTKVR (101 aa)).

The protein belongs to the class-I aminoacyl-tRNA synthetase family. MetG type 1 subfamily. In terms of assembly, homodimer. The cofactor is Zn(2+).

The protein resides in the cytoplasm. The enzyme catalyses tRNA(Met) + L-methionine + ATP = L-methionyl-tRNA(Met) + AMP + diphosphate. Functionally, is required not only for elongation of protein synthesis but also for the initiation of all mRNA translation through initiator tRNA(fMet) aminoacylation. The protein is Methionine--tRNA ligase of Methanocella arvoryzae (strain DSM 22066 / NBRC 105507 / MRE50).